Consider the following 257-residue polypeptide: Neurotrophin-3 (257 aa).

The first 18 residues, 1 to 18 (MSILFYMIFLAYLRGIQG), serve as a signal peptide directing secretion. A propeptide spanning residues 19–138 (NSMDQRRLPE…VANRTARRKR (120 aa)) is cleaved from the precursor. A disordered region spans residues 61–81 (STLPKAEAPREPERGEPAKSE). Over residues 67–79 (EAPREPERGEPAK) the composition is skewed to basic and acidic residues. N-linked (GlcNAc...) asparagine glycosylation is present at Asn-131. Disulfide bonds link Cys-152/Cys-217, Cys-195/Cys-246, and Cys-205/Cys-248.

The protein belongs to the NGF-beta family.

It is found in the secreted. Seems to promote the survival of visceral and proprioceptive sensory neurons. This is Neurotrophin-3 (NTF3) from Sus scrofa (Pig).